The sequence spans 884 residues: MISRNRRRNNQQKNIEKEKQLETIINKEVKENKDSMKEDKLVVTEESNGDVTTAKEQSNNINLQKNDLVKEVMNIQNQTLNTVVTENKVEIEEIVKKYIPSYNTDSLIVKKLTEIQESSAKTYNTLFRLFTPVKSYLYDINGEKKLSTRWYWKLLKDDLPAGDYSVRQFFLSLYLNVLEEMPDYIMLRDMAVDNPYSAEAGKIVDGKSKEILIELYQDQMTEGYIRRYMSELRHKISGETNTAKYPAILHPVDNELNQYFLEHQLIQPLTTRNIAELIPTQLYHDPNYVFNIDAAFLTNSRFVPPYLTQDRIGLHDGFESIWDSKTHADYVSARRFIPDLTELVDAEKQIKEMAAHLQLEAITVQVESQFLAGISAAAANEAFKFIIGSVLSTRTIAVEFITSNYMSLASCMYLMTIMPSEIFLRESLVAMQLAIINTLIYPALGLAQMHYQAGEVRTPFELAEMQVANRSIRQWLHHCNTLQFGRQITEGIIHLRFTNDIMTGRIVNLFSTMLVALSSQPFATYPLDYKRSVQRALQLLSNRTAQIADLTRLIVYNYTTLSACIVMNMHLVGTLTVERIQATSLTSLMMLISNKTVIPEPSSLFSYFSSNINFLTNYNEQIDNVVAEIMAAYRLNLYQQKMLMLVTRFVSKLYIFDAPKIPPDQMYRLRNRLRNIPVERRRADVFRIIMNNRDLIEKTSERICQGVLLSYTPMPLTYVEDVGLTNVINDTNSFQIINIEEIEKTGDYSAITNALLRDTPIILKGAIPYVTNSSVIDVLSKVDTTVFASIVKDRDISKLKPIKFIINSDSSEYYLVHNNKWTPTTTTAVYKARSQQFDIQHSVSMLESNLFFVVYNDLFKYIKTTTVLPINAVSYDGARIMQET.

Belongs to the rotavirus VP2 family. Homodecamer; each decamer is made up of two conformers of VP2, called VP2A and VP2B. Interacts with a VP1-VP3 complex. Interacts with the intermediate capsid protein VP6. Interacts with NSP5. Interacts (via N-terminus) with NSP2.

Its subcellular location is the virion. Functionally, inner capsid protein that self-assembles to form an icosahedral capsid with a T=2 symmetry, which consists of 120 copies of VP2, with channels at each of its five-fold vertices. This capsid constitutes the innermost concentric layer of the viral mature particle. It encapsidates the polymerase VP1, the capping enzyme VP3 and the genomic dsRNA, thereby defining the core. The innermost VP2 capsid and the intermediate VP6 capsid remain intact following cell entry to protect the dsRNA from degradation and to prevent unfavorable antiviral responses in the host cell during all the replication cycle of the virus. Nascent transcripts are transcribed within the structural confines of this double-layered particle (DLP) and are extruded through the channels formed by VP2 N-termini. VP2 is required for the replicase activity of VP1 polymerase. Probably recruits a copy of a VP1-VP3 complex, potentially along with a segment of plus-strand RNA, as a decamer of VP2 assembles. May activate the autoinhibited VP1/RNA complex to coordinate packaging and genome replication. The protein is Inner capsid protein VP2 of Homo sapiens (Human).